The chain runs to 260 residues: Late transcription factor 1 (260 aa).

Belongs to the chordopoxvirinae VLTF-1 family. Interacts with the late transcription factors VLTF-2 and VLTF-3. Interacts with the late transcription elongation factor VLTF-4. Interacts with itself.

Functionally, associates with RNA polymerase to initiate transcription from late gene promoters. The polypeptide is Late transcription factor 1 (OPG093) (Homo sapiens (Human)).